A 429-amino-acid chain; its full sequence is Citrate synthase (429 aa).

Residues histidine 306 and aspartate 364 contribute to the active site.

It belongs to the citrate synthase family.

The catalysed reaction is oxaloacetate + acetyl-CoA + H2O = citrate + CoA + H(+). Its pathway is carbohydrate metabolism; tricarboxylic acid cycle; isocitrate from oxaloacetate: step 1/2. This Rhizobium meliloti (strain 1021) (Ensifer meliloti) protein is Citrate synthase (gltA).